The chain runs to 193 residues: Apoptosis-associated speck-like protein containing a CARD (193 aa).

The region spanning 1–91 is the Pyrin domain; that stretch reads MGRARDAILD…AEQLQTTKEE (91 aa). Glycyl lysine isopeptide (Lys-Gly) (interchain with G-Cter in ubiquitin) cross-links involve residues Lys55 and Lys172. One can recognise a CARD domain in the interval 105–193; that stretch reads STARTGHFVD…PYLVMDLEQS (89 aa). Ser193 is modified (phosphoserine).

In terms of assembly, self-associates; enforced oligomerization induces apoptosis, NF-kappa-B regulation and interleukin-1 beta secretion. Homooligomers can form disk-like particles of approximately 12 nm diameter and approximately 1 nm height. Component of several inflammasomes containing one pattern recognition receptor/sensor, such as NLRP2, NLRP3, NLRP6, NLRC4, AIM2, MEFV or NOD2, and probably NLRC4 or NLRP12. Major component of the ASC pyroptosome, a 1-2 um supramolecular assembly (one per macrophage cell) which consists of oligomerized PYCARD dimers and CASP1. Interacts with CASP1 (precursor form); the interaction induces activation of CASP1 leading to the processing of interleukin-1 beta; PYCARD competes with RIPK2 for binding to CASP1. Interacts with NLRP3; the interaction requires the homooligomerization of NLRP3. Interacts with NLRP2, NLRC4, MEFV, CARD16, AIM2, NOD2, RIGI, RIPK2, PYDC1, PYDC2, NLRP10, CHUK, IKBKB and BAX. Interacts with CASP8. Component of the AIM2 PANoptosome complex, a multiprotein complex that drives inflammatory cell death (PANoptosis). Post-translationally, phosphorylated. In terms of processing, 'Lys-63'-linked polyubiquitination by TRAF3 is critical for speck formation and inflammasome activation. 'Lys-63'-linked deubiquitinated by USP50; a crucial step for NLRP3-mediated inflammasome activation. 'Lys-63'-linked polyubiquitination by PELI1 is also critical for speck formation and inflammasome activation. Deubiquitinated by USP3 that cleaves 'Lys-48'-linked ubiquitin chains and strengthens its stability by blocking proteasomal degradation. In terms of tissue distribution, expressed in small intestine, colon, thymus, spleen, brain, heart, skeletal muscle, kidney, lung and liver.

The protein resides in the cytoplasm. The protein localises to the inflammasome. It is found in the endoplasmic reticulum. It localises to the mitochondrion. Its subcellular location is the nucleus. Functionally, functions as a key mediator in apoptosis and inflammation. Promotes caspase-mediated apoptosis involving predominantly caspase-8 and also caspase-9 in a probable cell type-specific manner. Involved in activation of the mitochondrial apoptotic pathway, promotes caspase-8-dependent proteolytic maturation of BID independently of FADD in certain cell types and also mediates mitochondrial translocation of BAX and activates BAX-dependent apoptosis coupled to activation of caspase-9, -2 and -3. Involved in innate immune response by acting as an integral adapter in the assembly of various inflammasomes (NLRP2, NLRP3, NLRP6 and AIM2) which recruit and activate caspase-1 leading to processing and secretion of pro-inflammatory cytokines. Caspase-1-dependent inflammation leads to macrophage pyroptosis, a form of cell death. The function as activating adapter in different types of inflammasomes is mediated by the pyrin and CARD domains and their homotypic interactions. Clustered PYCARD nucleates the formation of caspase-1 filaments through the interaction of their respective CARD domains, acting as a platform for of caspase-1 polymerization. In the NLRC4 inflammasomes seems not be required but facilitates the processing of procaspase-1. In cooperation with NOD2 involved in an inflammasome activated by bacterial muramyl dipeptide leading to caspase-1 activation. May be involved in RIGI-triggered pro-inflammatory responses and inflammasome activation. In collaboration with AIM2 which detects cytosolic double-stranded DNA may also be involved in a caspase-1-independent cell death that involves caspase-8. In adaptive immunity may be involved in maturation of dendritic cells to stimulate T-cell immunity and in cytoskeletal rearrangements coupled to chemotaxis and antigen uptake may be involved in post-transcriptional regulation of the guanine nucleotide exchange factor DOCK2; the latter function is proposed to involve the nuclear form. Also involved in transcriptional activation of cytokines and chemokines independent of the inflammasome; this function may involve AP-1, NF-kappa-B, MAPK and caspase-8 signaling pathways. For regulation of NF-kappa-B activating and inhibiting functions have been reported. Modulates NF-kappa-B induction at the level of the IKK complex by inhibiting kinase activity of CHUK and IKBK. Proposed to compete with RIPK2 for association with CASP1 thereby down-regulating CASP1-mediated RIPK2-dependent NF-kappa-B activation and activating interleukin-1 beta processing. Modulates host resistance to DNA virus infection, probably by inducing the cleavage of and inactivating CGAS in presence of cytoplasmic double-stranded DNA. The protein is Apoptosis-associated speck-like protein containing a CARD (Pycard) of Mus musculus (Mouse).